A 452-amino-acid chain; its full sequence is GATA-binding factor 2 (452 aa).

Residues 130–182 (GGSLYPGTGSSACPSSSHSSPHLFGFPPTPPKDVSPDPGPASPPSSSRLEDKD) are disordered. Residues 139–151 (SSACPSSSHSSPH) show a composition bias toward low complexity. Residues 156–172 (PPTPPKDVSPDPGPASP) are compositionally biased toward pro residues. 2 consecutive GATA-type zinc fingers follow at residues 267-291 (CVNC…CNAC) and 321-345 (CANC…CNAC). Positions 426-438 (QTPTPIHPSSSLS) are enriched in polar residues. The disordered stretch occupies residues 426–452 (QTPTPIHPSSSLSFGHPHHSSMVTAMG).

In terms of tissue distribution, expressed in the developing ventral blood island, and in the embryonic nervous system.

The protein resides in the nucleus. The protein is GATA-binding factor 2 (gata2) of Xenopus laevis (African clawed frog).